The chain runs to 643 residues: Long-chain fatty acid transport protein 4 (643 aa).

Transmembrane regions (helical) follow at residues 20-42 (LPWT…WRFI) and 139-156 (FVGL…AALI). Position 243–254 (243–254 (YIYTSGTTGLPK)) interacts with AMP.

It belongs to the ATP-dependent AMP-binding enzyme family. Expressed at highest levels in brain, testis, colon and kidney. Expressed at medium levels in heart and liver, small intestine and stomach. Expressed at low levels in peripheral leukocytes, bone marrow, skeletal muscle and aorta. Expressed in adipose tissue. Expressed in brain gray matter.

It is found in the endoplasmic reticulum membrane. The catalysed reaction is a fatty acid(in) = a fatty acid(out). It catalyses the reaction (9Z,12Z)-octadecadienoate(out) = (9Z,12Z)-octadecadienoate(in). It carries out the reaction (9Z)-octadecenoate(out) = (9Z)-octadecenoate(in). The enzyme catalyses hexadecanoate(out) = hexadecanoate(in). The catalysed reaction is a long-chain fatty acid + ATP + CoA = a long-chain fatty acyl-CoA + AMP + diphosphate. It catalyses the reaction hexadecanoate + ATP + CoA = hexadecanoyl-CoA + AMP + diphosphate. It carries out the reaction (E)-hexadec-2-enoate + ATP + CoA = (2E)-hexadecenoyl-CoA + AMP + diphosphate. The enzyme catalyses (9Z)-octadecenoate + ATP + CoA = (9Z)-octadecenoyl-CoA + AMP + diphosphate. The catalysed reaction is (5Z,8Z,11Z,14Z)-eicosatetraenoate + ATP + CoA = (5Z,8Z,11Z,14Z)-eicosatetraenoyl-CoA + AMP + diphosphate. It catalyses the reaction a very long-chain fatty acid + ATP + CoA = a very long-chain fatty acyl-CoA + AMP + diphosphate. It carries out the reaction tetracosanoate + ATP + CoA = tetracosanoyl-CoA + AMP + diphosphate. In terms of biological role, mediates the levels of long-chain fatty acids (LCFA) in the cell by facilitating their transport across cell membranes. Appears to be the principal fatty acid transporter in small intestinal enterocytes. Also functions as an acyl-CoA ligase catalyzing the ATP-dependent formation of fatty acyl-CoA using LCFA and very-long-chain fatty acids (VLCFA) as substrates, which prevents fatty acid efflux from cells and might drive more fatty acid uptake. Plays a role in the formation of the epidermal barrier. Required for fat absorption in early embryogenesis. Probably involved in fatty acid transport across the blood barrier. Indirectly inhibits RPE65 via substrate competition and via production of VLCFA derivatives like lignoceroyl-CoA. Prevents light-induced degeneration of rods and cones. This Homo sapiens (Human) protein is Long-chain fatty acid transport protein 4.